A 471-amino-acid chain; its full sequence is MKMPKSIGLVHFIGIGGIGMSGIAEVLHNLGHRVQGSDQAESANVQRLRAKGIEVFVGHKPENLGDAEVVVVSTAIKKSNPELVAAREKLLPVVRRAEMLAELMRFRNAIAIGGTHGKTTTTSMVAALLEAGQLDPTVINGGIINAYGTNARMGEGEWMVVEADESDGTFLKLPADVAVVTNIDPEHLDHYGNFDAVRAAFRQFVENVPFYGFGVMCLDHPEVQALVGRIEDRKVVTYGENPQADVRFFNVRNEGTKSIFDVEIRRRRTGRVFSFKDLTLPMPGRHNISNACAAIAVANRLDISEEAIRKGLSTFGGVKRRFTLTGTWNGVQVFDDYGHHPVEIKAVLKAARESCKGRIIAVHQPHRFSRLSSLFEDFANCFNDADSILLSPVYAAGEDPIEGIDSEALVSRIRSGGHRDVRYLASPDQLAGIISTIAQPGDFVVLLGAGNITQWAAALPSELQALSGKSE.

114–120 (GTHGKTT) provides a ligand contact to ATP.

This sequence belongs to the MurCDEF family.

The protein localises to the cytoplasm. The catalysed reaction is UDP-N-acetyl-alpha-D-muramate + L-alanine + ATP = UDP-N-acetyl-alpha-D-muramoyl-L-alanine + ADP + phosphate + H(+). It functions in the pathway cell wall biogenesis; peptidoglycan biosynthesis. In terms of biological role, cell wall formation. The chain is UDP-N-acetylmuramate--L-alanine ligase from Allorhizobium ampelinum (strain ATCC BAA-846 / DSM 112012 / S4) (Agrobacterium vitis (strain S4)).